The sequence spans 518 residues: Glutamate--cysteine ligase (518 aa).

It belongs to the glutamate--cysteine ligase type 1 family. Type 1 subfamily.

The enzyme catalyses L-cysteine + L-glutamate + ATP = gamma-L-glutamyl-L-cysteine + ADP + phosphate + H(+). It participates in sulfur metabolism; glutathione biosynthesis; glutathione from L-cysteine and L-glutamate: step 1/2. This Escherichia coli O157:H7 protein is Glutamate--cysteine ligase.